Here is a 193-residue protein sequence, read N- to C-terminus: MKLLEERIIKDGNVLGENILKVDSFLTHQVDYHLMRDIGKVFAESYADAGITKVVTIEASGIAPAVYVAEALKVPMIFAKKHKNITMTEGILTAEVYSFTKQVTSTVSIASKFLSKDDKVLIIDDFLANGQAAKGLIEIIQQAGASVEGVGIVIEKSFQDGRQLLENMGVKVTSLARIKNFENGRLNFMEADA.

Leu20 and Thr27 together coordinate xanthine. 128-132 (ANGQA) serves as a coordination point for 5-phospho-alpha-D-ribose 1-diphosphate. Lys156 is a binding site for xanthine.

This sequence belongs to the purine/pyrimidine phosphoribosyltransferase family. Xpt subfamily. In terms of assembly, homodimer.

It is found in the cytoplasm. The catalysed reaction is XMP + diphosphate = xanthine + 5-phospho-alpha-D-ribose 1-diphosphate. It participates in purine metabolism; XMP biosynthesis via salvage pathway; XMP from xanthine: step 1/1. In terms of biological role, converts the preformed base xanthine, a product of nucleic acid breakdown, to xanthosine 5'-monophosphate (XMP), so it can be reused for RNA or DNA synthesis. The sequence is that of Xanthine phosphoribosyltransferase from Streptococcus uberis (strain ATCC BAA-854 / 0140J).